The chain runs to 145 residues: UPF0763 protein WS1752 (145 aa).

It belongs to the UPF0763 family.

The polypeptide is UPF0763 protein WS1752 (Wolinella succinogenes (strain ATCC 29543 / DSM 1740 / CCUG 13145 / JCM 31913 / LMG 7466 / NCTC 11488 / FDC 602W) (Vibrio succinogenes)).